The chain runs to 270 residues: Shikimate dehydrogenase (NADP(+)) (270 aa).

Shikimate is bound by residues 15–17 (SKS) and threonine 62. Catalysis depends on lysine 66, which acts as the Proton acceptor. Aspartate 78 contacts NADP(+). Positions 87 and 103 each coordinate shikimate. NADP(+)-binding positions include 128-132 (GAGGA), 152-157 (NRTVDR), and leucine 213. A shikimate-binding site is contributed by tyrosine 215. Glycine 237 lines the NADP(+) pocket.

Belongs to the shikimate dehydrogenase family. In terms of assembly, homodimer.

The enzyme catalyses shikimate + NADP(+) = 3-dehydroshikimate + NADPH + H(+). The protein operates within metabolic intermediate biosynthesis; chorismate biosynthesis; chorismate from D-erythrose 4-phosphate and phosphoenolpyruvate: step 4/7. Its function is as follows. Involved in the biosynthesis of the chorismate, which leads to the biosynthesis of aromatic amino acids. Catalyzes the reversible NADPH linked reduction of 3-dehydroshikimate (DHSA) to yield shikimate (SA). The polypeptide is Shikimate dehydrogenase (NADP(+)) (Halorhodospira halophila (strain DSM 244 / SL1) (Ectothiorhodospira halophila (strain DSM 244 / SL1))).